Reading from the N-terminus, the 136-residue chain is Large ribosomal subunit protein uL16 (136 aa).

This sequence belongs to the universal ribosomal protein uL16 family. As to quaternary structure, part of the 50S ribosomal subunit.

Binds 23S rRNA and is also seen to make contacts with the A and possibly P site tRNAs. The polypeptide is Large ribosomal subunit protein uL16 (Glaesserella parasuis serovar 5 (strain SH0165) (Haemophilus parasuis)).